A 115-amino-acid polypeptide reads, in one-letter code: Large ribosomal subunit protein bL19 (115 aa).

Belongs to the bacterial ribosomal protein bL19 family.

Its function is as follows. This protein is located at the 30S-50S ribosomal subunit interface and may play a role in the structure and function of the aminoacyl-tRNA binding site. This Nitratidesulfovibrio vulgaris (strain DSM 19637 / Miyazaki F) (Desulfovibrio vulgaris) protein is Large ribosomal subunit protein bL19.